We begin with the raw amino-acid sequence, 178 residues long: CDP-archaeol synthase (178 aa).

The next 5 helical transmembrane spans lie at 3–23, 56–76, 91–111, 123–143, and 149–169; these read LLLL…ANAV, FFGI…VILY, IILG…GSFI, APLL…YPLY, and LMVI…IIAY.

This sequence belongs to the CDP-archaeol synthase family. It depends on Mg(2+) as a cofactor.

The protein resides in the cell membrane. It catalyses the reaction 2,3-bis-O-(geranylgeranyl)-sn-glycerol 1-phosphate + CTP + H(+) = CDP-2,3-bis-O-(geranylgeranyl)-sn-glycerol + diphosphate. It functions in the pathway membrane lipid metabolism; glycerophospholipid metabolism. Catalyzes the formation of CDP-2,3-bis-(O-geranylgeranyl)-sn-glycerol (CDP-archaeol) from 2,3-bis-(O-geranylgeranyl)-sn-glycerol 1-phosphate (DGGGP) and CTP. This reaction is the third ether-bond-formation step in the biosynthesis of archaeal membrane lipids. This is CDP-archaeol synthase from Methanococcus maripaludis (strain C7 / ATCC BAA-1331).